A 58-amino-acid polypeptide reads, in one-letter code: Pepsin-1 (58 aa).

Positions 1–41 (LLQVPLEKGQSAREYLQEQGLWEQYRLKYPYNPMAKFDPSF) are cleaved as a propeptide — activation peptide.

This sequence belongs to the peptidase A1 family.

This is Pepsin-1 from Thunnus orientalis (North Pacific bluefin tuna).